The chain runs to 179 residues: Large ribosomal subunit protein uL6 (179 aa).

The protein belongs to the universal ribosomal protein uL6 family. As to quaternary structure, part of the 50S ribosomal subunit.

Its function is as follows. This protein binds to the 23S rRNA, and is important in its secondary structure. It is located near the subunit interface in the base of the L7/L12 stalk, and near the tRNA binding site of the peptidyltransferase center. The sequence is that of Large ribosomal subunit protein uL6 from Geobacter sulfurreducens (strain ATCC 51573 / DSM 12127 / PCA).